A 148-amino-acid chain; its full sequence is Transcriptional regulator MraZ (148 aa).

SpoVT-AbrB domains follow at residues Glu-5–Glu-53 and Ser-82–Ala-125.

The protein belongs to the MraZ family. As to quaternary structure, forms oligomers.

Its subcellular location is the cytoplasm. It localises to the nucleoid. The chain is Transcriptional regulator MraZ from Xanthomonas oryzae pv. oryzae (strain MAFF 311018).